Consider the following 1537-residue polypeptide: DNA (cytosine-5)-methyltransferase 1 (1537 aa).

Pro residues predominate over residues 1 to 13; sequence MPARSAPPPPALP. Disordered regions lie at residues 1 to 34 and 97 to 232; these read MPARSAPPPPALPPALRRRLRDLERDEDSLSEKE and RASN…DEKR. The DMAP1-binding domain occupies 8–105; sequence PPPALPPALR…SRASNGCAGN (98 aa). The span at 21–34 shows a compositional bias: basic and acidic residues; it reads RDLERDEDSLSEKE. The segment covering 129 to 154 has biased composition (low complexity); it reads SSSSSSSSSSSSSSSSSSSSSLLPAP. Polar residues predominate over residues 171–194; the sequence is SPASSRVTRSSGRQPTILSVFSKG. The segment at 182 to 194 is interaction with PCNA; that stretch reads GRQPTILSVFSKG. The span at 215-227 shows a compositional bias: acidic residues; that stretch reads KDEEEEEELEEKE. Positions 263, 266, and 329 each coordinate Zn(2+). Residue Ser420 is modified to Phosphoserine. The CXXC-type zinc finger occupies 558 to 604; that stretch reads NAMKRRRCGVCEVCQQPECGKCKACQNMVKFGGSGRSKQACLQRRCP. The Zn(2+) site is built by Cys565, Cys568, Cys571, Cys576, Cys579, Cys582, Cys598, and Cys603. Residues 614–638 form a disordered region; the sequence is DEEVDDNIPEMPSPKKMLQGRKKKQ. 2 BAH domains span residues 667–791 and 883–1011; these read ETLE…ETPP and HYRK…EDPP. Residues 1006–1050 form a disordered region; it reads SFEDPPNHARSSGNKGKGKGKGKGKGKGKSSTTCEQSEPEPTELK. A run of 7 repeats spans residues 1020–1021, 1022–1023, 1024–1025, 1026–1027, 1028–1029, 1030–1031, and 1032–1033. Positions 1020–1035 are 8 X 2 AA tandem repeats of K-G; that stretch reads KGKGKGKGKGKGKGKS. The span at 1021 to 1033 shows a compositional bias: basic residues; that stretch reads GKGKGKGKGKGKG. An 8; approximate repeat occupies 1034-1035; the sequence is KS. The region spanning 1054–1513 is the SAM-dependent MTase C5-type domain; it reads LRTLDVFSGC…LEIRACVGAR (460 aa). S-adenosyl-L-methionine contacts are provided by residues Ser1061, 1065 to 1066, 1083 to 1084, 1105 to 1106, and Cys1106; these read GL, EM, and DC. Cys1141 is a catalytic residue. Residues Asn1492 and Val1494 each coordinate S-adenosyl-L-methionine. Residues 1518-1537 are disordered; the sequence is SGAAVAPPAPEKMEMTAAAD.

It belongs to the class I-like SAM-binding methyltransferase superfamily. C5-methyltransferase family. As to quaternary structure, homodimer. Interacts with PCNA. In terms of tissue distribution, testis and lung.

It localises to the nucleus. The catalysed reaction is a 2'-deoxycytidine in DNA + S-adenosyl-L-methionine = a 5-methyl-2'-deoxycytidine in DNA + S-adenosyl-L-homocysteine + H(+). Methylates CpG residues. Preferentially methylates hemimethylated DNA. It is responsible for maintaining methylation patterns established in development. Mediates transcriptional repression by direct binding to HDAC2. Plays a role in promoter hypermethylation and transcriptional silencing of tumor suppressor genes (TSGs) or other tumor-related genes. Also required to maintain a transcriptionally repressive state of genes in undifferentiated embryonic stem cells (ESCs). Associates at promoter regions of tumor suppressor genes (TSGs) leading to their gene silencing. This is DNA (cytosine-5)-methyltransferase 1 (DNMT1) from Gallus gallus (Chicken).